The following is a 713-amino-acid chain: MNSFMALVLIWMIIACAEADKPLGETGTTGFQICKNALKLPVLEVLPGGGWDNLRNVDMGRVMDLTYTNCKTTEDGQYIIPDEVYTIPQKESNLEMNSEVLESWMNYQSTTSLSINTELALFSRVNGKFSTEFQRMKTLQVKDQAVTTRVQVRNRIYTVKTTPTSELSLGFTKALMDICDQLEKNQTKMATYLAELLILNYGTHVITSVDAGAALVQEDHVRSSFLLDNQNSQNTVTASAGIAFLNIVNFKVETDYISQTSLTKDYLSNRTNSRVQSFGGVPFYPGITLETWQKGITNHLVAIDRAGLPLHFFIKPDKLPGLPGPLVKKLSKTVETAVRHYYTFNTHPGCTNVDSPNFNFQANMDDDSCDAKVTNFTFGGVYQECTELSGDVLCQNLEQKNLLTGDFSCPPGYSPVHLLSQTHEEGYSRLECKKKCTLKIFCKTVCEDVFRVAKAEFRAYWCVAAGQVPDNSGLLFGGVFTDKTINPMTNAQSCPAGYIPLNLFESLKVCVSLDYELGFKFSVPFGGFFSCIMGNPLVNSDTAKDVRAPSLKKCPGGFSQHLAVISDGCQVSYCVKAGIFTGGSLLPVRLPPYTKPPLMSQVATNTVIVTNSETARSWIKDPQTNQWKLGEPLELRRAMTVIHGDSNGMSGGEAAGITLGVTIALGIVITLAIYGTRKYKKKEYQEIEEQESLVGSLATDATVLNGEEDPSPA.

Positions 1-19 (MNSFMALVLIWMIIACAEA) are cleaved as a signal peptide. Residues 30–345 (GFQICKNALK…TAVRHYYTFN (316 aa)) enclose the MACPF domain. Cysteines 34 and 70 form a disulfide. Transmembrane regions (beta stranded) follow at residues 113–120 (LSINTELA) and 127–132 (GKFSTE). Residue N185 is glycosylated (N-linked (GlcNAc...) asparagine). 2 beta stranded membrane passes run 235 to 244 (TVTASAGIAF) and 248 to 256 (VNFKVETDY). N269 is a glycosylation site (N-linked (GlcNAc...) asparagine). C350 and C369 are disulfide-bonded. N375 carries an N-linked (GlcNAc...) asparagine glycan. 5 disulfides stabilise this stretch: C385-C394, C432-C446, C436-C442, C531-C569, and C554-C574. The interval 410–653 (PPGYSPVHLL…GDSNGMSGGE (244 aa)) is P2. A helical transmembrane segment spans residues 654-674 (AAGITLGVTIALGIVITLAIY).

It belongs to the MPEG1 family. In terms of assembly, homooligomer; predominantly forms a homooligomeric arc-shaped pore complex instead of complete rings of 16 subunits. Proteolytically processed in two steps to generate the Macrophage-expressed gene 1 protein, processed form: cleaved by trypsin in proximity of the helical transmembrane domain releases the ectodomain into the lysosomal lumen to orient the pore-forming domain toward the endogenous membranes, and processed by the asparagine endopeptidase (LGMN). Proteolytic processing in antigen-containing vesicles is pH-dependent. Post-translationally, monoubiquitinated in response to bacterial infection; ubiquitination is required for vesicular localization and antibacterial activity and can be blocked by bacterial cell cycle inhibiting factor (cif). Expressed constitutively in a variety of cell types including macrophages, microglia, neutrophils, T cells, marginal zone B cells, keratinocytes, splenocytes and intestinal epithelial cells.

It localises to the cytoplasmic vesicle membrane. It is found in the cytoplasmic vesicle. The protein localises to the phagosome membrane. Forms arc- and ring-shaped pre-pores on top of the membrane at neutral to slightly acidic pH conditions and converts to pores upon acidification. Undergoes transition from the pre-pore to the pore in a processive clockwise hand-over-hand process. In the pore state, 2 alpha-helical regions refold into transmembrane hairpins (TMH1 and TMH2) in each protomer that form in the ensemble complex giant beta-barrel transmembrane pores. In terms of biological role, pore-forming protein involved in both innate and adaptive immunity. Plays a central role in antigen cross-presentation in dendritic cells by forming a pore in antigen-containing compartments, thereby promoting delivery of antigens for cross-presentation. Also involved in innate immune response following bacterial infection; shows antibacterial activity against a wide spectrum of Gram-positive, Gram-negative and acid-fast bacteria. Reduces the viability of the intracytosolic pathogen L.monocytogenes by inhibiting acidification of the phagocytic vacuole of host cells which restricts bacterial translocation from the vacuole to the cytosol. Required for the antibacterial activity of reactive oxygen species and nitric oxide. Its function is as follows. Pore-forming protein that plays a central role in antigen cross-presentation in dendritic cells by mediating delivery of antigens for cross-presentation. Dendritic cells bridge innate and adaptive immunity by capturing exogenous antigens on MHC class-I molecules and presenting them to naive CD8(+) T-cells. Acts by forming a pore in antigen-containing compartments, promoting the release of antigens into the cytosol, enabling generation of MHCI:peptide complexes and T-cell priming. This is Macrophage-expressed gene 1 protein from Mus musculus (Mouse).